The primary structure comprises 492 residues: Protein nucleotidyltransferase YdiU (492 aa).

Residues glycine 88, glycine 90, arginine 91, lysine 111, aspartate 123, glycine 124, arginine 174, and arginine 181 each coordinate ATP. Aspartate 250 acts as the Proton acceptor in catalysis. Residues asparagine 251 and aspartate 260 each contribute to the Mg(2+) site. Aspartate 260 is a binding site for ATP.

It belongs to the SELO family. Mg(2+) serves as cofactor. Mn(2+) is required as a cofactor.

It carries out the reaction L-seryl-[protein] + ATP = 3-O-(5'-adenylyl)-L-seryl-[protein] + diphosphate. The catalysed reaction is L-threonyl-[protein] + ATP = 3-O-(5'-adenylyl)-L-threonyl-[protein] + diphosphate. The enzyme catalyses L-tyrosyl-[protein] + ATP = O-(5'-adenylyl)-L-tyrosyl-[protein] + diphosphate. It catalyses the reaction L-histidyl-[protein] + UTP = N(tele)-(5'-uridylyl)-L-histidyl-[protein] + diphosphate. It carries out the reaction L-seryl-[protein] + UTP = O-(5'-uridylyl)-L-seryl-[protein] + diphosphate. The catalysed reaction is L-tyrosyl-[protein] + UTP = O-(5'-uridylyl)-L-tyrosyl-[protein] + diphosphate. Its function is as follows. Nucleotidyltransferase involved in the post-translational modification of proteins. It can catalyze the addition of adenosine monophosphate (AMP) or uridine monophosphate (UMP) to a protein, resulting in modifications known as AMPylation and UMPylation. The protein is Protein nucleotidyltransferase YdiU of Rhodopseudomonas palustris (strain TIE-1).